The sequence spans 116 residues: Appetite-regulating hormone (116 aa).

A signal peptide spans methionine 1–alanine 23. Serine 26 carries O-decanoyl serine; alternate lipidation. A lipid anchor (O-hexanoyl serine; alternate) is attached at serine 26. Serine 26 carries O-octanoyl serine; alternate lipidation. The segment at serine 29–alanine 67 is disordered. The segment covering glutamate 31–lysine 42 has biased composition (basic and acidic residues). A propeptide spans alanine 51 to arginine 74 (removed in mature form). Leucine amide is present on leucine 97. The propeptide at glycine 98–glutamate 116 is removed in mature form.

The protein belongs to the motilin family. Post-translationally, O-octanoylated by GOAT/MBOAT4. O-octanoylation is essential for ghrelin activity. In terms of processing, amidation of Leu-97 is essential for obestatin activity.

It localises to the secreted. Its function is as follows. Ghrelin is the ligand for growth hormone secretagogue receptor type 1 (GHSR). Induces the release of growth hormone from the pituitary. Has an appetite-stimulating effect, induces adiposity and stimulates gastric acid secretion. Involved in growth regulation. Functionally, obestatin may be the ligand for GPR39. May have an appetite-reducing effect resulting in decreased food intake. May reduce gastric emptying activity and jejunal motility. The chain is Appetite-regulating hormone (GHRL) from Capra hircus (Goat).